Here is a 382-residue protein sequence, read N- to C-terminus: 3-isopropylmalate dehydrogenase (382 aa).

Residue 91–102 (GPKWGTGSVRPE) participates in NAD(+) binding. Residues Arg109, Arg119, Arg148, and Asp240 each contribute to the substrate site. 3 residues coordinate Mg(2+): Asp240, Asp265, and Asp269. 304-315 (GSAPDLTENKVN) contacts NAD(+).

It belongs to the isocitrate and isopropylmalate dehydrogenases family. In terms of assembly, homodimer. Mg(2+) serves as cofactor. It depends on Mn(2+) as a cofactor.

The protein resides in the cytoplasm. It catalyses the reaction (2R,3S)-3-isopropylmalate + NAD(+) = 4-methyl-2-oxopentanoate + CO2 + NADH. It functions in the pathway amino-acid biosynthesis; L-leucine biosynthesis; L-leucine from 3-methyl-2-oxobutanoate: step 3/4. Catalyzes the oxidation of 3-carboxy-2-hydroxy-4-methylpentanoate (3-isopropylmalate) to 3-carboxy-4-methyl-2-oxopentanoate. The product decarboxylates to 4-methyl-2 oxopentanoate. The sequence is that of 3-isopropylmalate dehydrogenase (LEU2) from Debaryomyces hansenii (strain ATCC 36239 / CBS 767 / BCRC 21394 / JCM 1990 / NBRC 0083 / IGC 2968) (Yeast).